A 226-amino-acid chain; its full sequence is Staphylococcal superantigen-like 1 (226 aa).

A signal peptide spans 1–30 (MKFKAIAKASLALGMLATGVITSNVQSVQA).

The protein belongs to the staphylococcal/streptococcal toxin family. Homodimer.

It localises to the secreted. Functionally, mediates virulence by proteolytically cleaving host proteins, including collagens types I and IV as well as human cytokines IL8, IL17A, and IFN-gamma. The chain is Staphylococcal superantigen-like 1 from Staphylococcus aureus (strain NCTC 8325 / PS 47).